A 346-amino-acid chain; its full sequence is NADH-ubiquinone oxidoreductase chain 2 (346 aa).

Transmembrane regions (helical) follow at residues 1 to 21 (MNPH…TITI), 25 to 45 (HWVL…PLIS), 60 to 80 (FLTQ…NAWA), 95 to 115 (CLLL…HFWF), 124 to 144 (LMTA…LLLM), 149 to 169 (LNPA…GWMG), 178 to 195 (ILAF…IILV), 200 to 219 (LALL…FMAL), 242 to 262 (ATLM…GFMP), 274 to 294 (EMTP…FFYL), and 326 to 346 (AILA…HAIV).

The protein belongs to the complex I subunit 2 family.

The protein resides in the mitochondrion inner membrane. It carries out the reaction a ubiquinone + NADH + 5 H(+)(in) = a ubiquinol + NAD(+) + 4 H(+)(out). In terms of biological role, core subunit of the mitochondrial membrane respiratory chain NADH dehydrogenase (Complex I) that is believed to belong to the minimal assembly required for catalysis. Complex I functions in the transfer of electrons from NADH to the respiratory chain. The immediate electron acceptor for the enzyme is believed to be ubiquinone. This Sibirionetta formosa (Baikal teal) protein is NADH-ubiquinone oxidoreductase chain 2 (MT-ND2).